The primary structure comprises 736 residues: Ethylene receptor 2 (736 aa).

Transmembrane regions (helical) follow at residues 22–42 (ISDF…VYFV), 53–73 (VLVQ…INLW), and 94–114 (AAVS…LLSV). Cys64 and His68 together coordinate Cu cation. Residues 157 to 305 (DRHTILKTTL…VVADQVAVAL (149 aa)) form the GAF domain. The Histidine kinase domain occupies 348 to 585 (VMNHEMRTPM…TAIFIVKLGI (238 aa)). Phosphohistidine; by autocatalysis is present on His351. The region spanning 613–730 (KVLVMDDNGF…KMRSVLSGLL (118 aa)) is the Response regulatory domain. The residue at position 661 (Asp661) is a 4-aspartylphosphate.

The protein belongs to the ethylene receptor family. As to quaternary structure, homodimer; disulfide-linked. Cu cation is required as a cofactor. Activation probably requires a transfer of a phosphate group between a His in the transmitter domain and an Asp of the receiver domain. Leaves, flowers and fruits.

Its subcellular location is the endoplasmic reticulum membrane. It catalyses the reaction ATP + protein L-histidine = ADP + protein N-phospho-L-histidine.. In terms of biological role, may act early in the ethylene signal transduction pathway, possibly as an ethylene receptor, or as a regulator of the pathway. In Solanum lycopersicum (Tomato), this protein is Ethylene receptor 2 (ETR2).